Here is a 400-residue protein sequence, read N- to C-terminus: NADH-quinone oxidoreductase subunit D (400 aa).

Belongs to the complex I 49 kDa subunit family. In terms of assembly, NDH-1 is composed of 14 different subunits. Subunits NuoB, C, D, E, F, and G constitute the peripheral sector of the complex.

It is found in the cell inner membrane. It catalyses the reaction a quinone + NADH + 5 H(+)(in) = a quinol + NAD(+) + 4 H(+)(out). Functionally, NDH-1 shuttles electrons from NADH, via FMN and iron-sulfur (Fe-S) centers, to quinones in the respiratory chain. The immediate electron acceptor for the enzyme in this species is believed to be a menaquinone. Couples the redox reaction to proton translocation (for every two electrons transferred, four hydrogen ions are translocated across the cytoplasmic membrane), and thus conserves the redox energy in a proton gradient. The polypeptide is NADH-quinone oxidoreductase subunit D (Chlorobium phaeobacteroides (strain DSM 266 / SMG 266 / 2430)).